Reading from the N-terminus, the 172-residue chain is MDLVVGRVVKAHGVTGELAVDVRTDDPEGRFVAGAVLRGRPARGGAEREFVIESVRSHGDRMLIRLQGVGDRDAADALRGTLFLVDSAELPPIEDPDEFYDHQLEGMAVSTTGGQPVGTVAEVLHTAAGELLAVRDPDGAEVLVPFVSAIVVSVSLADNAIEIDPPEGLLDL.

The 74-residue stretch at 96-169 folds into the PRC barrel domain; it reads PDEFYDHQLE…AIEIDPPEGL (74 aa).

This sequence belongs to the RimM family. As to quaternary structure, binds ribosomal protein uS19.

It is found in the cytoplasm. An accessory protein needed during the final step in the assembly of 30S ribosomal subunit, possibly for assembly of the head region. Essential for efficient processing of 16S rRNA. May be needed both before and after RbfA during the maturation of 16S rRNA. It has affinity for free ribosomal 30S subunits but not for 70S ribosomes. This is Ribosome maturation factor RimM from Mycolicibacterium vanbaalenii (strain DSM 7251 / JCM 13017 / BCRC 16820 / KCTC 9966 / NRRL B-24157 / PYR-1) (Mycobacterium vanbaalenii).